We begin with the raw amino-acid sequence, 491 residues long: Delayed-rectifier potassium channel regulatory subunit KCNS3 (491 aa).

Residues 1–182 (MVFGEFFHRP…IRMENPAYCL (182 aa)) lie on the Cytoplasmic side of the membrane. The helical transmembrane segment at 183-204 (SAKLIAISSLSVVLASIVAMCV) threads the bilayer. Topologically, residues 205–220 (HSMSEFQNEDGEVDDP) are extracellular. The helical transmembrane segment at 221 to 243 (VLEGVEIACIAWFTGELAIRLVA) threads the bilayer. Residues 244 to 254 (APSQKKFWKNP) are Cytoplasmic-facing. A helical transmembrane segment spans residues 255–275 (LNIIDFVSIIPFYATLAVDTK). Topologically, residues 276 to 285 (EEESEDIENM) are extracellular. Residues 286–306 (GKVVQILRLMRIFRILKLARH) form a helical; Voltage-sensor membrane-spanning segment. Topologically, residues 307–321 (SVGLRSLGATLRHSY) are cytoplasmic. A helical membrane pass occupies residues 322–343 (HEVGLLLLFLSVGISIFSVLIY). At 344–357 (SVEKDELASSLTSI) the chain is on the extracellular side. Residues 358–369 (PICWWWATISMT) constitute an intramembrane region (helical). A Selectivity filter motif is present at residues 370-375 (TVGYGD). Residues 370–377 (TVGYGDTH) lie within the membrane without spanning it. Over 378 to 384 (PVTLAGK) the chain is Extracellular. The chain crosses the membrane as a helical span at residues 385-413 (IIASTCIICGILVVALPITIIFNKFSKYY). The Cytoplasmic portion of the chain corresponds to 414–491 (QKQKDMDVDQ…TASLENCTAK (78 aa)).

The protein belongs to the potassium channel family. S (TC 1.A.1.2) subfamily. Kv9.3/KCNS3 sub-subfamily. In terms of assembly, heterotetramer with KCNB1. Does not form homomultimers. As to expression, expressed in myocytes. Detected in lung, spleen, brain and heart.

The protein localises to the cell membrane. Potassium channel regulatory subunit that modulates the delayed rectifier potassium channel activity of KCNB1 by namely slowing down the deactivation and inactivation time constants. While it does not form functional channel on its own, it can form functional heterotetrameric channels with KCNB1. This is Delayed-rectifier potassium channel regulatory subunit KCNS3 from Rattus norvegicus (Rat).